Here is a 287-residue protein sequence, read N- to C-terminus: Iodotyrosine deiodinase (287 aa).

A helical transmembrane segment spans residues 15–34; sequence HWPSLFITLALIWIVKRLFF. FMN contacts are provided by residues 96–100, serine 125, and 125–126; these read RRSIR and SG. Residues alanine 127, glutamate 154, tyrosine 158, and lysine 179 each coordinate 3,5-diiodo-L-tyrosine. 3-iodo-L-tyrosine contacts are provided by alanine 127, glutamate 154, tyrosine 158, and lysine 179. FMN is bound by residues 235–237 and arginine 277; that span reads VTT.

It belongs to the nitroreductase family. In terms of assembly, homodimer. The cofactor is FMN. In terms of tissue distribution, expressed in spermatocytes.

It localises to the cell membrane. The enzyme catalyses 2 iodide + L-tyrosine + 2 NADP(+) = 3,5-diiodo-L-tyrosine + 2 NADPH + H(+). It catalyses the reaction iodide + L-tyrosine + NADP(+) = 3-iodo-L-tyrosine + NADPH. It carries out the reaction 3-iodo-L-tyrosine + iodide + NADP(+) = 3,5-diiodo-L-tyrosine + NADPH + H(+). The catalysed reaction is L-tyrosine + chloride + NADP(+) = 3-chloro-L-tyrosine + NADPH. The enzyme catalyses bromide + L-tyrosine + NADP(+) = 3-bromo-L-tyrosine + NADPH. Functionally, catalyzes the dehalogenation of halotyrosines such as 3-bromo-L-tyrosine, 3-chloro-L-tyrosine, 3-iodo-L-tyrosine and 3,5-diiodo-L-tyrosine. Activity towards 3-fluoro-L-tyrosine is weak. Important for male and female fertility. May be involved in maintaining the viability of sperm, both during development in the testes and storage in the female spermatheca. This Drosophila melanogaster (Fruit fly) protein is Iodotyrosine deiodinase.